We begin with the raw amino-acid sequence, 166 residues long: Chorion protein S18 (166 aa).

A signal peptide spans 1-17; the sequence is MMKFMCLFVCAIAAVSA.

Belongs to the chorion protein S15/S18 family.

The protein resides in the secreted. In terms of biological role, chorion membrane (egg shell) protein; plays a role in protecting the egg from the environment. This chain is Chorion protein S18 (Cp18), found in Drosophila grimshawi (Hawaiian fruit fly).